The sequence spans 246 residues: NAD(P)H-hydrate epimerase (246 aa).

The YjeF N-terminal domain occupies 12-234; that stretch reads AAEIDKELMG…DFANKFGFEP (223 aa). 69-73 contacts (6S)-NADPHX; the sequence is NNGGD. 2 residues coordinate K(+): N70 and D138. Residues 142-148 and D173 contribute to the (6S)-NADPHX site; that span reads GFSFKPP. Residue T176 participates in K(+) binding.

Belongs to the NnrE/AIBP family. Requires K(+) as cofactor.

The protein resides in the cytoplasm. The protein localises to the mitochondrion. It carries out the reaction (6R)-NADHX = (6S)-NADHX. The catalysed reaction is (6R)-NADPHX = (6S)-NADPHX. Functionally, catalyzes the epimerization of the S- and R-forms of NAD(P)HX, a damaged form of NAD(P)H that is a result of enzymatic or heat-dependent hydration. This is a prerequisite for the S-specific NAD(P)H-hydrate dehydratase to allow the repair of both epimers of NAD(P)HX. In Saccharomyces cerevisiae (strain ATCC 204508 / S288c) (Baker's yeast), this protein is NAD(P)H-hydrate epimerase.